Consider the following 392-residue polypeptide: Probable glucan endo-1,6-beta-glucosidase B (392 aa).

An N-terminal signal peptide occupies residues 1–18 (MKVTRLAVLNTLATLTVA). The N-linked (GlcNAc...) asparagine glycan is linked to asparagine 31. Glutamate 220 serves as the catalytic Proton donor. The active-site Nucleophile is glutamate 322.

This sequence belongs to the glycosyl hydrolase 5 (cellulase A) family.

The protein resides in the secreted. It carries out the reaction Random hydrolysis of (1-&gt;6)-linkages in (1-&gt;6)-beta-D-glucans.. Its function is as follows. Beta-glucanases participate in the metabolism of beta-glucan, the main structural component of the cell wall. Acts on lutean, pustulan and 1,6-oligo-beta-D-glucosides. In Aspergillus flavus (strain ATCC 200026 / FGSC A1120 / IAM 13836 / NRRL 3357 / JCM 12722 / SRRC 167), this protein is Probable glucan endo-1,6-beta-glucosidase B (exgB).